We begin with the raw amino-acid sequence, 651 residues long: Cylicin-1 (651 aa).

Disordered stretches follow at residues 110–241 (LKKA…CSEN) and 267–615 (NYSQ…CEPS). 2 stretches are compositionally biased toward basic and acidic residues: residues 111 to 129 (KKAEYKKSKDEKGGTPLKK) and 146 to 173 (QIVEEKTKRQNEADKTPLKSSHENEQSK). A compositionally biased stretch (polar residues) spans 186 to 195 (QNSKTVSKNC). Residues 196–205 (SQKDKKDSKN) are compositionally biased toward basic and acidic residues. Over residues 230-241 (SNDPISEICSEN) the composition is skewed to polar residues. The segment covering 271 to 281 (NNSKNYSLKYT) has biased composition (low complexity). 8 consecutive repeat copies span residues 278-305 (LKYTKYTKKDTKKNAKKSSDAESEDSKD), 306-342 (AKKDSKKVKKNVKKDDKKKDVKKDTESTDAESGDSKD), 343-379 (ERKDTKKDKKKLKKDDKKKDTKKYPESTDTESGDAKD), 380-417 (ARNDSRNLKKASKNDDKKKDAKKITFSTDSESELESKE), 418-453 (SQKDEKKDKKDSKTDNKKSVKNDEESTDADSEPKGD), 454-491 (SKKGKKDEKKGKKDSKKDDKKKDAKKNAESTEMESDLE), 492-531 (LKKDKKHSKEKKGSKKDIKKDARKDTESTDAEFDESSKTG), and 532-553 (FKTSTKIKGSDTESEESLYKPG). Basic and acidic residues-rich tracts occupy residues 284-308 (TKKDTKKNAKKSSDAESEDSKDAKK), 318-331 (KKDDKKKDVKKDTE), 338-368 (GDSKDERKDTKKDKKKLKKDDKKKDTKKYPE), 375-402 (GDAKDARNDSRNLKKASKNDDKKKDAKK), 413-441 (LESKESQKDEKKDKKDSKTDNKKSVKNDE), and 448-482 (SEPKGDSKKGKKDEKKGKKDSKKDDKKKDAKKNAE). A compositionally biased stretch (basic residues) spans 495 to 505 (DKKHSKEKKGS). The span at 506–518 (KKDIKKDARKDTE) shows a compositional bias: basic and acidic residues. Residues 529-538 (KTGFKTSTKI) show a composition bias toward polar residues. Residues 532-553 (FKTSTKIKGSDTESEESLYKPG) are 8 X approximate tandem repeats. The span at 587 to 607 (TFNEKGEKASTGRVPPSREKP) shows a compositional bias: basic and acidic residues.

Interacts with proteins of spermatozoa head including ACTL7A, CCIN, FAM209A and SPACA1; the interactions may be necessary for proper acrosome attachment to the nuclear envelope. Testis.

The protein localises to the cytoplasm. It localises to the cytoskeleton. Its subcellular location is the perinuclear theca. The protein resides in the calyx. In terms of biological role, plays a role in the establishment of normal sperm morphology during spermatogenesis and is required for acrosome attachment to the nuclear envelope. This Homo sapiens (Human) protein is Cylicin-1 (CYLC1).